A 381-amino-acid chain; its full sequence is Cytochrome b (381 aa).

4 helical membrane passes run 34–54 (FGSL…FLAM), 78–99 (WLIR…YLHI), 114–134 (WNIG…GYVL), and 179–199 (FFAF…IHLL). His-84 and His-98 together coordinate heme b. Residues His-183 and His-197 each coordinate heme b. A ubiquinone is bound at residue His-202. 4 helical membrane passes run 227–247 (YKDL…ALFM), 289–309 (LGGV…PLLH), 321–341 (MTQI…WIGG), and 348–368 (FMMV…IIMP).

It belongs to the cytochrome b family. The cytochrome bc1 complex contains 3 respiratory subunits (MT-CYB, CYC1 and UQCRFS1), 2 core proteins (UQCRC1 and UQCRC2) and probably 6 low-molecular weight proteins. The cofactor is heme b.

Its subcellular location is the mitochondrion inner membrane. In terms of biological role, component of the ubiquinol-cytochrome c reductase complex (complex III or cytochrome b-c1 complex) that is part of the mitochondrial respiratory chain. The b-c1 complex mediates electron transfer from ubiquinol to cytochrome c. Contributes to the generation of a proton gradient across the mitochondrial membrane that is then used for ATP synthesis. The protein is Cytochrome b (mt-cyb) of Prionace glauca (Blue shark).